Reading from the N-terminus, the 80-residue chain is MVTKNYLIDKVHDKLDYLSKQDVKESVDLILDYLNESLKEQKRIEIRNFGNFSIRKRKFPESNKFYNTVYYRMPKNLFKD.

It belongs to the bacterial histone-like protein family.

Functionally, histone-like DNA-binding protein which is capable of wrapping DNA to stabilize it, and thus to prevent its denaturation under extreme environmental conditions. The sequence is that of DNA-binding protein HU-like from Rickettsia prowazekii (strain Madrid E).